The chain runs to 154 residues: 6,7-dimethyl-8-ribityllumazine synthase (154 aa).

5-amino-6-(D-ribitylamino)uracil-binding positions include phenylalanine 26, 60–62 (ALE), and 84–86 (CII). Residue 89–90 (QT) participates in (2S)-2-hydroxy-3-oxobutyl phosphate binding. Histidine 92 (proton donor) is an active-site residue. Residue asparagine 117 participates in 5-amino-6-(D-ribitylamino)uracil binding. A (2S)-2-hydroxy-3-oxobutyl phosphate-binding site is contributed by arginine 131.

The protein belongs to the DMRL synthase family.

The catalysed reaction is (2S)-2-hydroxy-3-oxobutyl phosphate + 5-amino-6-(D-ribitylamino)uracil = 6,7-dimethyl-8-(1-D-ribityl)lumazine + phosphate + 2 H2O + H(+). The protein operates within cofactor biosynthesis; riboflavin biosynthesis; riboflavin from 2-hydroxy-3-oxobutyl phosphate and 5-amino-6-(D-ribitylamino)uracil: step 1/2. Its function is as follows. Catalyzes the formation of 6,7-dimethyl-8-ribityllumazine by condensation of 5-amino-6-(D-ribitylamino)uracil with 3,4-dihydroxy-2-butanone 4-phosphate. This is the penultimate step in the biosynthesis of riboflavin. In Verminephrobacter eiseniae (strain EF01-2), this protein is 6,7-dimethyl-8-ribityllumazine synthase.